We begin with the raw amino-acid sequence, 468 residues long: FAD-linked oxidoreductase hasG (468 aa).

Residues Leu37–Trp211 enclose the FAD-binding PCMH-type domain.

It belongs to the oxygen-dependent FAD-linked oxidoreductase family. The cofactor is FAD.

The protein operates within secondary metabolite biosynthesis. Functionally, FAD-linked oxidoreductase; part of the gene cluster that mediates the biosynthesis of hexadehydro-astechrome (HAS), a tryptophan-derived iron(III)-complex that acts as a virulence factor in infected mice. Within the pathway, hasG converts the prenyl to a methylbutadienyl side chain. The HAS biosynthesis begins with the synthesis of a tethered Trp-Ala dipeptide by the NRPS hasD. The 7-dimethylallyltryptophan synthase hasE then catalyzes the prenylation of the hasD-tethered tryptophan or the resulting tethered Trp-Ala dipeptide at the C-7 position of the indole moiety. HAS biosynthesis continues via tethered intermediates with the succesive actions of the cytochrome P450 monooxygenase hasH, the O-methyltransferase hasC, and the FAD-linked oxidoreductase hasG. The resulting O-methylated diketopiperazine is then released from hasD. Finally, three O-methylated diketopiperazine molecules assemble in a trimeric complex with Fe(III) to produce hexadehydro-astechrome. The polypeptide is FAD-linked oxidoreductase hasG (Aspergillus fumigatus (strain CBS 144.89 / FGSC A1163 / CEA10) (Neosartorya fumigata)).